Reading from the N-terminus, the 261-residue chain is Indole-3-glycerol phosphate synthase (261 aa).

It belongs to the TrpC family.

The catalysed reaction is 1-(2-carboxyphenylamino)-1-deoxy-D-ribulose 5-phosphate + H(+) = (1S,2R)-1-C-(indol-3-yl)glycerol 3-phosphate + CO2 + H2O. It functions in the pathway amino-acid biosynthesis; L-tryptophan biosynthesis; L-tryptophan from chorismate: step 4/5. The sequence is that of Indole-3-glycerol phosphate synthase from Paraburkholderia xenovorans (strain LB400).